The following is a 1157-amino-acid chain: Probable inactive leucine-rich repeat receptor kinase XIAO (1157 aa).

The first 21 residues, 1–21 (MPPPPRLLFLLVMLLVVAAPG), serve as a signal peptide directing secretion. The N-linked (GlcNAc...) asparagine glycan is linked to Asn-58. LRR repeat units lie at residues 101-125 (LVYL…LSRI), 127-149 (SLRA…FLAN), 150-172 (LTNL…VSFP), 173-196 (PSLK…VSAS), 198-220 (TSLQ…SLGT), 221-245 (LQDL…LSNC), 247-269 (ALLH…VAAI), 270-293 (PSLQ…AFGG), 296-319 (NSSL…VSLG), 320-343 (KDLQ…LAGA), 344-367 (GGLT…VGQL), 368-391 (TALQ…IGRC), 393-414 (ALQV…ALGG), 415-439 (LRRL…LGNL), 440-463 (SWLE…LFVL), 464-487 (GNLT…IGNL), 489-511 (ALQS…IGNL), 513-536 (NLRV…LFGL), 537-559 (PQLQ…GFSS), 561-583 (WSLR…TYGY), 584-608 (LPSL…LANC), 609-631 (SNLT…DFAR), 632-656 (LGEL…ISNC), 658-680 (SLVT…LSNL), 681-704 (SKLQ…LAQI), and 706-728 (GMLS…LGSR). The N-linked (GlcNAc...) asparagine glycan is linked to Asn-149. 3 N-linked (GlcNAc...) asparagine glycosylation sites follow: Asn-192, Asn-204, and Asn-244. N-linked (GlcNAc...) asparagine glycosylation occurs at Asn-296. Asn-438 carries N-linked (GlcNAc...) asparagine glycosylation. Residues Asn-465, Asn-494, and Asn-524 are each glycosylated (N-linked (GlcNAc...) asparagine). Asn-567, Asn-607, Asn-610, Asn-655, Asn-679, Asn-692, and Asn-711 each carry an N-linked (GlcNAc...) asparagine glycan. Residues 765–785 (LALLIGVVAATVLLLVLFCCC) traverse the membrane as a helical segment. The disordered stretch occupies residues 804 to 825 (VKKRRRSPGRGSGSSGTSTDSV). The 296-residue stretch at 849–1144 (FDEENVLSRG…LEGCRVGPDI (296 aa)) folds into the Protein kinase domain. Residues 855–863 (LSRGRHGLV), 930–932 (DYM), 936–939 (NLAT), 980–985 (DVKPQN), and Asp-998 contribute to the ATP site.

This sequence belongs to the protein kinase superfamily. Ser/Thr protein kinase family. In terms of tissue distribution, expressed in developing culm, coleoptile, primary root, young spikelet, young leaf blade and leaf sheath, floral meristem primordia, stamen primordia, and lemma and palea primordia.

The protein resides in the cell membrane. Its function is as follows. Functions in the early stages of organ development by regulating cell division rate. Is probably involved in the regulation of a number of cell-cycle genes. May act as regulator of brassinosteroid (BR) signaling and cell-cycle controlling organ growth. This chain is Probable inactive leucine-rich repeat receptor kinase XIAO, found in Oryza sativa subsp. japonica (Rice).